We begin with the raw amino-acid sequence, 290 residues long: Probable protein phosphatase 2C 20 (290 aa).

One can recognise a PPM-type phosphatase domain in the interval 31 to 278 (AHGYDFVKGK…DDISCIVPCF (248 aa)). Residues Asp68, Gly69, Asp230, and Asp269 each coordinate Mn(2+).

Belongs to the PP2C family. It depends on Mg(2+) as a cofactor. Requires Mn(2+) as cofactor.

The enzyme catalyses O-phospho-L-seryl-[protein] + H2O = L-seryl-[protein] + phosphate. It catalyses the reaction O-phospho-L-threonyl-[protein] + H2O = L-threonyl-[protein] + phosphate. Its function is as follows. May be involved in defense signaling. The chain is Probable protein phosphatase 2C 20 (PPC3-1.2) from Arabidopsis thaliana (Mouse-ear cress).